We begin with the raw amino-acid sequence, 296 residues long: Ribosomal RNA small subunit methyltransferase A (296 aa).

Positions 31, 33, 58, 79, 111, and 136 each coordinate S-adenosyl-L-methionine.

Belongs to the class I-like SAM-binding methyltransferase superfamily. rRNA adenine N(6)-methyltransferase family. RsmA subfamily.

It is found in the cytoplasm. It catalyses the reaction adenosine(1518)/adenosine(1519) in 16S rRNA + 4 S-adenosyl-L-methionine = N(6)-dimethyladenosine(1518)/N(6)-dimethyladenosine(1519) in 16S rRNA + 4 S-adenosyl-L-homocysteine + 4 H(+). Its function is as follows. Specifically dimethylates two adjacent adenosines (A1518 and A1519) in the loop of a conserved hairpin near the 3'-end of 16S rRNA in the 30S particle. May play a critical role in biogenesis of 30S subunits. This chain is Ribosomal RNA small subunit methyltransferase A, found in Lactobacillus delbrueckii subsp. bulgaricus (strain ATCC BAA-365 / Lb-18).